A 91-amino-acid polypeptide reads, in one-letter code: Acylphosphatase (91 aa).

Residues 5–91 form the Acylphosphatase-like domain; the sequence is CSKFIVSGHV…EHDYQGFEIL (87 aa). N38 is an active-site residue.

The protein belongs to the acylphosphatase family.

It carries out the reaction an acyl phosphate + H2O = a carboxylate + phosphate + H(+). This is Acylphosphatase (acyP) from Vibrio cholerae serotype O1 (strain ATCC 39541 / Classical Ogawa 395 / O395).